A 110-amino-acid polypeptide reads, in one-letter code: PHD finger-like domain-containing protein 5B (110 aa).

This sequence belongs to the PHF5 family.

This chain is PHD finger-like domain-containing protein 5B, found in Arabidopsis thaliana (Mouse-ear cress).